We begin with the raw amino-acid sequence, 388 residues long: Ectopic P granules protein 6 (388 aa).

Residues 1–25 show a composition bias toward basic and acidic residues; the sequence is MSKKEETIFFRIEKENRPESSKKEE. Positions 1 to 33 are disordered; the sequence is MSKKEETIFFRIEKENRPESSKKEEDENSTEEM. A WD 1 repeat occupies 217 to 257; sequence AHLTDIAQVALNCQGTLVATGSTKGTVIRVFDARTKGPLYE. The LRRG motif signature appears at 258-261; sequence LRRG. The stretch at 262–301 is one WD 2 repeat; sequence TVQAHLQCMAFSPCSSYLAVASDKGTLHMFGIRDAEPQKK. The segment at 265–328 is required for atg-2 binding; the sequence is AHLQCMAFSP…LDRPVMAIGF (64 aa).

The protein belongs to the WD repeat PROPPIN family. Interacts with atg-2; the interaction is direct. In terms of tissue distribution, widely expressed in tissues including pharyngeal, muscle and neuronal tissues.

Its subcellular location is the cytoplasm. It is found in the preautophagosomal structure membrane. In terms of biological role, component of the epg-6/atg-2 complex, which is involved in the generation of autophagosomes from omegasomes and in the distribution of atg-9 and atg-13 during the autophagy-mediated degradation of protein aggregates. Binds to phosphatidylinositols on preautophagosomes, which are early autophagic structures, to promote autophagosome formation. In particular, binds with high affinity to phosphatidylinositols including phosphatidylinositol 3-phosphate (PtdIns(3)P) and phosphatidylinositol 5-phosphate (PtdIns(5)P), but more weakly to phosphatidylinositol 4-phosphate (PtdIns(4)P) and phosphatidylinositol 3,5-bisphosphate (PtdIns(3,5)P2). Involved in autophagy-mediated degradation of ribosomal RNA and ribosomal proteins in lysosomes, which is essential for maintaining nucleotide homeostasis. This is Ectopic P granules protein 6 from Caenorhabditis elegans.